The chain runs to 1209 residues: Putative lysine-specific demethylase JMJ16 (1209 aa).

Positions 146–187 (APVFYPSEEEFEDTLNYIAKIRPEAEKYGICRIVPPPSWKPP) constitute a JmjN domain. A Nuclear localization signal motif is present at residues 217 to 224 (MKKISKLP). Positions 361–527 (KYAKSGWNLN…HGQIAIELYC (167 aa)) constitute a JmjC domain. Fe cation-binding residues include His-407, Glu-409, and His-495. Cys-617, Cys-620, Cys-631, Cys-633, Cys-640, His-643, Cys-648, and Cys-650 together coordinate Zn(2+). The segment at 617–667 (CCICFFDLHLSAAGCRCSPEKYSCLTHVKELCSCPWVTKYFLFRYDIDELN) adopts a C5HC2 zinc-finger fold. The segment at 872–900 (DTRNTISLPTNDQKTMRRDVPSSTSHAEV) is disordered. The segment covering 875–884 (NTISLPTNDQ) has biased composition (polar residues). An FYR N-terminal domain is found at 974–1032 (VVRRINCNVEPLSYGCVLSGKSWCSRRAIFPKGFRSRVKYINILDPTNMCFYISEILDA). Positions 1034–1124 (RNSPLFMVYL…RVCTDYWDSR (91 aa)) constitute an FYR C-terminal domain.

This sequence belongs to the JARID1 histone demethylase family. As to quaternary structure, interacts with MMD1 in the nucleus of male meiocytes, especially on pachytene chromosomes. The cofactor is Fe(2+). Confined to inflorescences.

The protein localises to the nucleus. It catalyses the reaction N(6),N(6),N(6)-trimethyl-L-lysyl(4)-[histone H3] + 2-oxoglutarate + O2 = N(6),N(6)-dimethyl-L-lysyl(4)-[histone H3] + formaldehyde + succinate + CO2. The enzyme catalyses N(6),N(6)-dimethyl-L-lysyl(4)-[histone H3] + 2-oxoglutarate + O2 = N(6)-methyl-L-lysyl(4)-[histone H3] + formaldehyde + succinate + CO2. It carries out the reaction N(6)-methyl-L-lysyl(4)-[histone H3] + 2-oxoglutarate + O2 = L-lysyl(4)-[histone H3] + formaldehyde + succinate + CO2. In terms of biological role, functions as a histone H3 'Lys-4' (H3K4me) demethylase involved in the negative regulation of gene expression. Active on H3K4me1, H3K4me2 and H3K4me3. Not active on mono-, di- and trimethylated H3K9, H3K27 and H3K36 in somatic cells. However, also active on H3K9 when in complex with MMD1, a meiocyte-specific histone reader. Together with MMD1, promotes gene expression in male meiocytes in an H3K9me3-dependent manner, and contributes to meiotic chromosome condensation by triggering some condensin promoters (e.g. CAP-D3 and CAP-H). Together with JMJ14 and JMJ17, required for plant growth and development. Represses leaf senescence in an age-dependent manner by demethylating H3K4me3 activating histone marks at senescence-associated genes (SAGs) loci, including WRKY53 and SAG201, thus preventing their premature expression. The chain is Putative lysine-specific demethylase JMJ16 from Arabidopsis thaliana (Mouse-ear cress).